A 195-amino-acid polypeptide reads, in one-letter code: Calcineurin B homologous protein 1 (195 aa).

Gly-2 carries N-myristoyl glycine lipidation. Positions Gly-2–Ser-6 match the Necessary for association with microtubule and interaction with GAPDH motif. 4 consecutive EF-hand domains span residues Ser-26–Pro-61, Ile-66–Asp-101, Ser-110–Val-145, and Gln-151–Glu-186. Asp-123, Asp-125, Asp-127, Lys-129, and Glu-134 together coordinate Ca(2+). The Nuclear export signal 1 motif lies at Val-138–Ile-147. The interval Val-143 to Val-185 is necessary for nuclear export signal. Asp-164, Asp-166, Asp-168, and Glu-175 together coordinate Ca(2+). Positions Phe-176–Val-185 match the Nuclear export signal 2 motif.

This sequence belongs to the calcineurin regulatory subunit family. CHP subfamily. In terms of assembly, monomer. Interacts with STK17B; the interaction occurs in a calcium-independent manner and induces the translocation of CHP1 from the Golgi to the nucleus. Interacts with GAPDH; the interaction is direct, occurs in a N-myristoylation-dependent manner and facilitates the ability of CHP1 to bind microtubules. Interacts with KIF1B (via the C-terminal end of the kinesin-motor domain); the interaction occurs in a calcium-dependent manner. Associates (via C-terminal domain) with microtubules; the association occurs with polymerized microtubules during the cell cycle in a myristoylation- and calcium-independent manner and is enhanced by GAPDH. Interacts with PPP3CA. Interacts with SLC9A1/NHE1 (via the C-terminal domain); the interaction occurs at the plasma membrane in a calcium-dependent manner and at a domain that is critical for growth factor stimulation of the exchanger. Interacts with SLC9A3; increases SLC9A3 trafficking and activity at the plasma membrane. In terms of processing, phosphorylated; decreased phosphorylation is associated with an increase in SLC9A1/NHE1 Na(+)/H(+) exchange activity. Phosphorylation occurs in serum-dependent manner. The phosphorylation state may regulate the binding to SLC9A1/NHE1. Both N-myristoylation and calcium-mediated conformational changes are essential for its function in exocytic traffic. N-myristoylation is required for its association with microtubules and interaction with GAPDH, but not for the constitutive association to membranes. In terms of tissue distribution, ubiquitously expressed. Has been found in fetal eye, lung, liver, muscle, heart, kidney, thymus and spleen.

The protein localises to the nucleus. It is found in the cytoplasm. Its subcellular location is the cytoskeleton. The protein resides in the endomembrane system. It localises to the endoplasmic reticulum-Golgi intermediate compartment. The protein localises to the endoplasmic reticulum. It is found in the cell membrane. Its subcellular location is the membrane. In terms of biological role, calcium-binding protein involved in different processes such as regulation of vesicular trafficking, plasma membrane Na(+)/H(+) exchanger and gene transcription. Involved in the constitutive exocytic membrane traffic. Mediates the association between microtubules and membrane-bound organelles of the endoplasmic reticulum and Golgi apparatus and is also required for the targeting and fusion of transcytotic vesicles (TCV) with the plasma membrane. Functions as an integral cofactor in cell pH regulation by controlling plasma membrane-type Na(+)/H(+) exchange activity. Affects the pH sensitivity of SLC9A1/NHE1 by increasing its sensitivity at acidic pH. Required for the stabilization and localization of SLC9A1/NHE1 at the plasma membrane. Inhibits serum- and GTPase-stimulated Na(+)/H(+) exchange. Plays a role as an inhibitor of ribosomal RNA transcription by repressing the nucleolar UBF1 transcriptional activity. May sequester UBF1 in the nucleoplasm and limit its translocation to the nucleolus. Associates to the ribosomal gene promoter. Acts as a negative regulator of the calcineurin/NFAT signaling pathway. Inhibits NFAT nuclear translocation and transcriptional activity by suppressing the calcium-dependent calcineurin phosphatase activity. Also negatively regulates the kinase activity of the apoptosis-induced kinase STK17B. Inhibits both STK17B auto- and substrate-phosphorylations in a calcium-dependent manner. The polypeptide is Calcineurin B homologous protein 1 (CHP1) (Homo sapiens (Human)).